A 372-amino-acid polypeptide reads, in one-letter code: Protein zntB (372 aa).

The next 3 helical transmembrane spans lie at 15-35 (LIMCFLSGLSTAIGGLYVIFI), 42-62 (LLGHLLSFSSGVMIYISFMDL), and 70-90 (IGFYNANIWFFVGIIFFAVIL). The tract at residues 99 to 166 (ESGDSNHAHS…IAKSKNKKKS (68 aa)) is disordered. A compositionally biased stretch (basic and acidic residues) spans 114 to 124 (IEKHSSEKKEV). Residues 133 to 167 (NGKDKKQKQQKQKQQKQQQQQKQNIAKSKNKKKSK) are a coiled coil. Over residues 137 to 146 (KKQKQQKQKQ) the composition is skewed to basic residues. A compositionally biased stretch (low complexity) spans 147 to 159 (QKQQQQQKQNIAK). A run of 5 helical transmembrane segments spans residues 170–192 (YLNSVGIATAIGVSLHNFPEGVA), 207–229 (LMLAIAAHNIPEGMAVAAPIFSA), 237–257 (FKYCLYSGLCEPVGAIIFGLI), 271–291 (LAAVAGIMVFMVIKELLPAAF), and 301–321 (FSNIIGMIFFFFSIHFLHSML). The segment at 328–372 (AGDGGHGHSHGGHGHSHGHGHSHGGHSHDSQHVESPQSSSFNAFA) is disordered. Over residues 334-352 (GHSHGGHGHSHGHGHSHGG) the composition is skewed to basic residues. The segment covering 360–372 (VESPQSSSFNAFA) has biased composition (polar residues).

The protein belongs to the ZIP transporter (TC 2.A.5) family. ZupT subfamily.

The protein resides in the membrane. May transport divalent cations. May participate, with dstA, in the regulation of the differentiation of stalk cells during development. This Dictyostelium discoideum (Social amoeba) protein is Protein zntB (zntB).